The chain runs to 520 residues: Polycomb protein PHO (520 aa).

C2H2-type zinc fingers lie at residues 357–381 (IACPHKGCNKHFRDSSAMRKHLHTH), 386–408 (HVCAECGKAFVESSKLKRHQLVH), 414–438 (FQCTFEGCGKRFSLDFNLRTHVRIH), and 444–468 (FVCPFDACNKKFAQSTNLKSHILTH). The segment at 475-497 (TSISGKSGCSNAESNSQSEDTSA) is disordered.

In terms of assembly, component of the Esc/E(z) complex, composed of Esc, E(z), Su(z)12, HDAC1/Rpd3 and Caf1-55. This complex is distinct from the PRC1 complex, which contains many other PcG proteins like Pc, Ph, Psc, Su(z)2. The two complexes however cooperate and interact together during the first 3 hours of development to establish PcG silencing. Component of the chromatin remodeling Ino80 complex. Interacts with Sfmbt to form a pho-repressive complex (PhoRC).

The protein localises to the nucleus. In terms of biological role, polycomb group (PcG) protein that binds to the 5'-CNGCCATNNNNG-3' sequence found in the regulatory regions of many genes. PcG proteins act by forming multiprotein complexes, which are required to maintain the transcriptionally repressive state of homeotic genes throughout development. PcG proteins are not required to initiate repression, but to maintain it during later stages of development. They probably act via the methylation of histones, rendering chromatin heritably changed in its expressibility. Probably targets the Esc/E(z) complex to DNA. Necessary but not sufficient to recruit a functional PcG repressive complex that represses target genes, suggesting that the recruitment of the distinct PRC1 complex is also required to allow a subsequent repression. Its function is as follows. Proposed core component of the chromatin remodeling Ino80 complex which is involved in transcriptional regulation, DNA replication and probably DNA repair. This Drosophila melanogaster (Fruit fly) protein is Polycomb protein PHO (pho).